We begin with the raw amino-acid sequence, 384 residues long: Chorismate synthase (384 aa).

The NADP(+) site is built by Arg-39 and Arg-45. FMN is bound by residues 130 to 132, 248 to 249, Gly-292, 307 to 311, and Arg-333; these read RSS, NA, and KPIPT.

Belongs to the chorismate synthase family. In terms of assembly, homotetramer. The cofactor is FMNH2.

The enzyme catalyses 5-O-(1-carboxyvinyl)-3-phosphoshikimate = chorismate + phosphate. The protein operates within metabolic intermediate biosynthesis; chorismate biosynthesis; chorismate from D-erythrose 4-phosphate and phosphoenolpyruvate: step 7/7. Functionally, catalyzes the anti-1,4-elimination of the C-3 phosphate and the C-6 proR hydrogen from 5-enolpyruvylshikimate-3-phosphate (EPSP) to yield chorismate, which is the branch point compound that serves as the starting substrate for the three terminal pathways of aromatic amino acid biosynthesis. This reaction introduces a second double bond into the aromatic ring system. This Exiguobacterium sibiricum (strain DSM 17290 / CCUG 55495 / CIP 109462 / JCM 13490 / 255-15) protein is Chorismate synthase.